Here is a 253-residue protein sequence, read N- to C-terminus: MSWRLVYASTVGTSHISADLPCQDACQMQIAWLNDQQPLLSVFVADGAGSVSQGGEGAMLAVNEAMAYMSQKVQGGELGLNDVLATNMVLTIRQRLFAEAEAKELAVRDFACTFLGLISSPDGTLIMQIGDGGVVVDLGHGLQLPLTPMAGEYANMTHFITDEDAVSRLETFTSTGRAHKVAAFTDGIQRLALNMLDNSPHVPFFTPFFNGLAAATQEQLDLLPELLKQFLSSPAVNERTDDDKTLALALWAE.

Mn(2+) serves as cofactor. Phosphorylated by YegI.

The enzyme catalyses O-phospho-L-seryl-[protein] + H2O = L-seryl-[protein] + phosphate. It carries out the reaction O-phospho-L-threonyl-[protein] + H2O = L-threonyl-[protein] + phosphate. With respect to regulation, activity dramatically decreases in the presence of the general protein phosphatase inhibitor sodium phosphate. Slightly inhibited by sodium fluoride. Activity decreases in the presence of the metal chelator EDTA. In terms of biological role, PP2C-like phosphatase that can dephosphorylate YegI. In vitro, can hydrolyze p-nitrophenyl phosphate (pNPP) to p-nitrophenol. This Escherichia coli (strain K12) protein is Serine/threonine-protein phosphatase 3.